We begin with the raw amino-acid sequence, 3291 residues long: Protocadherin-16 (3291 aa).

An N-terminal signal peptide occupies residues 1-35; sequence MQEELSVALSCPGMKSLGTLLPLLVLLGTTVPGIR. Over 36 to 2933 the chain is Extracellular; it reads GQAGSLDLQI…PDLNLLLVGA (2898 aa). Cadherin domains follow at residues 37–137, 138–249, 250–356, 369–466, 476–572, 573–679, 680–784, 785–888, 889–994, 995–1105, 1100–1205, 1218–1317, 1326–1429, 1430–1539, 1539–1642, 1643–1744, 1745–1848, 1849–1953, 1976–2061, 2062–2164, 2165–2270, 2270–2369, 2370–2475, 2476–2595, 2596–2699, 2700–2806, and 2807–2926; these read QAGS…APAF, PQAR…APAF, NQSR…QPSM, VSEA…APAF, LPEV…EPQF, QRTF…PPQF, YPRE…PPIF, EQLQ…SPAF, PAPE…APRF, DSPT…EPTF, SEEP…SPTF, IQVP…SPDL, VPVV…APAF, ARDP…APVF, FASP…APAF, PQQE…SPTF, GNTH…APAF, PVPS…APAF, LATL…GPRF, PRAN…APRF, LQPH…RPTI, IPQP…VPIF, SQSL…APSF, TLPH…PPVF, TRAS…GPAF, PLSL…DPVF, and LAPS…APDL. N-linked (GlcNAc...) asparagine glycosylation occurs at Asn-396. The segment at 951-971 is disordered; that stretch reads GPPGGPPHELEVEAQDGGSPP. Asn-1711 carries N-linked (GlcNAc...) asparagine glycosylation. An N-linked (GlcNAc...) asparagine glycan is attached at Asn-2354. Asn-2562 carries an N-linked (GlcNAc...) asparagine glycan. Residues 2934–2954 traverse the membrane as a helical segment; the sequence is VAASLGVVVVLALAALVLGLV. At 2955–3291 the chain is on the cytoplasmic side; that stretch reads RARSRKAEAA…EPPDDTELRI (337 aa). The disordered stretch occupies residues 2978–3033; that stretch reads SLQKLGREPPSPPPSEHLYHQTLPSYGGPGAGGPYPRGGSLDPSHSSGRGSAEAAE. Residues 3004–3013 are compositionally biased toward gly residues; sequence GGPGAGGPYP. Ser-3048 is modified (phosphoserine). 2 disordered regions span residues 3051 to 3080 and 3226 to 3291; these read SSLA…PAPD and ASHR…ELRI. Residues 3237–3259 show a composition bias toward low complexity; the sequence is SLSSAAMSPSFSPSLSPLAARSP. Residues 3270–3279 are compositionally biased toward polar residues; the sequence is PSASALSTES.

Heterophilic interaction with FAT4; this interaction affects their respective protein levels.

The protein resides in the cell membrane. In terms of biological role, calcium-dependent cell-adhesion protein. Mediates functions in neuroprogenitor cell proliferation and differentiation. In Rattus norvegicus (Rat), this protein is Protocadherin-16 (Dchs1).